The sequence spans 509 residues: Membrane-bound lytic murein transglycosylase F (509 aa).

The first 40 residues, Met-1 to Ser-40, serve as a signal peptide directing secretion. Positions Arg-41–Val-280 are non-LT domain. An LT domain region spans residues Asn-281–Leu-509. Glu-327 is a catalytic residue. The segment at Asp-474–Ala-500 is disordered.

This sequence in the N-terminal section; belongs to the bacterial solute-binding protein 3 family. It in the C-terminal section; belongs to the transglycosylase Slt family.

Its subcellular location is the cell outer membrane. The catalysed reaction is Exolytic cleavage of the (1-&gt;4)-beta-glycosidic linkage between N-acetylmuramic acid (MurNAc) and N-acetylglucosamine (GlcNAc) residues in peptidoglycan, from either the reducing or the non-reducing ends of the peptidoglycan chains, with concomitant formation of a 1,6-anhydrobond in the MurNAc residue.. Murein-degrading enzyme that degrades murein glycan strands and insoluble, high-molecular weight murein sacculi, with the concomitant formation of a 1,6-anhydromuramoyl product. Lytic transglycosylases (LTs) play an integral role in the metabolism of the peptidoglycan (PG) sacculus. Their lytic action creates space within the PG sacculus to allow for its expansion as well as for the insertion of various structures such as secretion systems and flagella. This is Membrane-bound lytic murein transglycosylase F from Hahella chejuensis (strain KCTC 2396).